Consider the following 664-residue polypeptide: MRGCLQLARWLSAAPKGTAASLTRAPFGLANATRFFTNSAARAGSRATASKPVTDLENRISAIPIERYRNFCIVAHVDHGKSTLSDRLLELTGTIQPGSNKQVLDKLDVERERGITVKAQTCTMIYNHNGEDYLLHLVDTPGHVDFRAEVSRSYASCGGALLLVDASQGVQAQTVANFYLAFAQGLELIPVINKVDLPSAEPQRALDQMKHTFELDTENAVMVSAKTGLNVEQLLPTVVDKIPAPIGDCKKPLRMLLVDSWYDSYKGVICLVRIFDGELRAGQQVVSFATGLKYYVGEVGIMYPNETAQSVIRAGQVGYIYFNPGMKRSQEAKIGDTFTKVGSEKAVQPLPGFEEPKAMVFVAAYPVDADHFEHLEDSINQLVLNDRSITVQKESSEALGAGFRLGFLGTLHCSVFEDRLRQEHGASIIITPPSVPVKVIWTDGKEEIITSPVRFPDDEEVRNKIAEIQEPYVLATLTFPEEYLGKVIELCEANRGEQKTLEYFTATQVILKYELPLAQLVDDFFGKLKGSTKGYASLDYEESAWQPGHIVKLQLLVNKAPVDAVARIMHSSQVDRLARQWVTKFKQHVDRQLFEVVIQAAVGRKVIARETVKPYRKDVLAKLHASDVSRRRKLLEKQKEGRKRLRAVGNVVIEHKAFQAFLAK.

Residues 1–43 constitute a mitochondrion transit peptide; the sequence is MRGCLQLARWLSAAPKGTAASLTRAPFGLANATRFFTNSAARA. The 181-residue stretch at 66–246 folds into the tr-type G domain; sequence ERYRNFCIVA…TVVDKIPAPI (181 aa). GTP contacts are provided by residues 75–82, 139–143, and 193–196; these read AHVDHGKS, DTPGH, and NKVD.

This sequence belongs to the TRAFAC class translation factor GTPase superfamily. Classic translation factor GTPase family. LepA subfamily.

It is found in the mitochondrion inner membrane. It catalyses the reaction GTP + H2O = GDP + phosphate + H(+). In terms of biological role, promotes mitochondrial protein synthesis. May act as a fidelity factor of the translation reaction, by catalyzing a one-codon backward translocation of tRNAs on improperly translocated ribosomes. Binds to mitochondrial ribosomes in a GTP-dependent manner. This is Translation factor guf1, mitochondrial (guf1) from Aspergillus clavatus (strain ATCC 1007 / CBS 513.65 / DSM 816 / NCTC 3887 / NRRL 1 / QM 1276 / 107).